Here is a 142-residue protein sequence, read N- to C-terminus: Hemoglobin subunit alpha (142 aa).

The 141-residue stretch at 2–142 (VLSANDKSNV…VGNVLTSKYR (141 aa)) folds into the Globin domain. Residue histidine 59 coordinates O2. Residue histidine 88 coordinates heme b.

The protein belongs to the globin family. As to quaternary structure, heterotetramer of two alpha chains and two beta chains. As to expression, red blood cells.

Its function is as follows. Involved in oxygen transport from the lung to the various peripheral tissues. In Aptenodytes forsteri (Emperor penguin), this protein is Hemoglobin subunit alpha (HBA).